A 3255-amino-acid polypeptide reads, in one-letter code: Genome polyprotein (3255 aa).

Positions Val-292–Tyr-437 constitute a Peptidase S30 domain. Active-site for P1 proteinase activity residues include His-345, Asp-354, and Ser-388. Residues Lys-489 to Cys-492 carry the Involved in interaction with stylet and aphid transmission motif. The Involved in virions binding and aphid transmission signature appears at Pro-747–Lys-749. A Peptidase C6 domain is found at Met-773–Gly-895. Active-site for helper component proteinase activity residues include Cys-781 and His-854. The Helicase ATP-binding domain occupies Glu-1397 to Glu-1549. An ATP-binding site is contributed by Gly-1410–Ser-1417. The DECH box signature appears at Asp-1499–His-1502. The 160-residue stretch at Asp-1568–Ser-1727 folds into the Helicase C-terminal domain. Residues Glu-2062–Lys-2069 carry the Nuclear localization signal motif. Tyr-2084 is modified (O-(5'-phospho-RNA)-tyrosine). Positions Ser-2215–Asn-2433 constitute a Peptidase C4 domain. Active-site for nuclear inclusion protein A activity residues include His-2260, Asp-2295, and Cys-2365. One can recognise a RdRp catalytic domain in the interval Trp-2699–Leu-2823. The tract at residues Ala-2980–Lys-3028 is disordered. Positions Lys-2989–Ile-3005 are enriched in basic and acidic residues. Residue Thr-3237 is modified to Phosphothreonine.

Belongs to the potyviridae genome polyprotein family. Interacts with host eIF4E protein (via cap-binding region); this interaction mediates the translation of the VPg-viral RNA conjugates. Part of a complex that comprises VPg, RNA, host EIF4E and EIF4G; this interaction mediates the translation of the VPg-viral RNA conjugates. VPg is uridylylated by the polymerase and is covalently attached to the 5'-end of the genomic RNA. This uridylylated form acts as a nucleotide-peptide primer for the polymerase. In terms of processing, potyviral RNA is expressed as two polyproteins which undergo post-translational proteolytic processing. Genome polyprotein is processed by NIa-pro, P1 and HC-pro proteinases resulting in the production of at least ten individual proteins. P3N-PIPO polyprotein is cleaved by P1 and HC-pro proteinases resulting in the production of three individual proteins. The P1 proteinase and the HC-pro cleave only their respective C-termini autocatalytically. 6K1 is essential for proper proteolytic separation of P3 from CI.

Its subcellular location is the host cytoplasmic vesicle. The protein resides in the host nucleus. It localises to the virion. The catalysed reaction is RNA(n) + a ribonucleoside 5'-triphosphate = RNA(n+1) + diphosphate. It carries out the reaction Hydrolyzes glutaminyl bonds, and activity is further restricted by preferences for the amino acids in P6 - P1' that vary with the species of potyvirus, e.g. Glu-Xaa-Xaa-Tyr-Xaa-Gln-|-(Ser or Gly) for the enzyme from tobacco etch virus. The natural substrate is the viral polyprotein, but other proteins and oligopeptides containing the appropriate consensus sequence are also cleaved.. It catalyses the reaction Hydrolyzes a Gly-|-Gly bond at its own C-terminus, commonly in the sequence -Tyr-Xaa-Val-Gly-|-Gly, in the processing of the potyviral polyprotein.. In terms of biological role, required for aphid transmission and also has proteolytic activity. Only cleaves a Gly-Gly dipeptide at its own C-terminus. Interacts with virions and aphid stylets. Acts as a suppressor of RNA-mediated gene silencing, also known as post-transcriptional gene silencing (PTGS), a mechanism of plant viral defense that limits the accumulation of viral RNAs. May have RNA-binding activity. Its function is as follows. Has helicase activity. It may be involved in replication. Indispensable for virus replication. Reduces the abundance of host transcripts related to jasmonic acid biosynthesis therefore altering the host defenses. In order to increase its own stability, decreases host protein degradation pathways. Functionally, indispensable for virus replication. In terms of biological role, mediates the cap-independent, EIF4E-dependent translation of viral genomic RNAs. Binds to the cap-binding site of host EIF4E and thus interferes with the host EIF4E-dependent mRNA export and translation. VPg-RNA directly binds EIF4E and is a template for transcription. Also forms trimeric complexes with EIF4E-EIF4G, which are templates for translation. Its function is as follows. Has RNA-binding and proteolytic activities. An RNA-dependent RNA polymerase that plays an essential role in the virus replication. Functionally, involved in aphid transmission, cell-to-cell and systemis movement, encapsidation of the viral RNA and in the regulation of viral RNA amplification. The sequence is that of Genome polyprotein from Lettuce mosaic virus (strain 0 / isolate French) (LMV).